The primary structure comprises 1292 residues: Calcium-transporting ATPase 2 (1292 aa).

The segment at 1 to 105 is disordered; it reads MPTYNDDDDS…EQASSKSSTS (105 aa). The Cytoplasmic portion of the chain corresponds to 1–236; it reads MPTYNDDDDS…RLMLEAFKDK (236 aa). A compositionally biased stretch (polar residues) spans 23 to 41; sequence KPSSSQFLGVPSSNYNQRE. The segment covering 44–60 has biased composition (low complexity); that stretch reads SRSGSSTISREPSSSGT. The span at 68–78 shows a compositional bias: basic and acidic residues; it reads DSMKESYDKNK. A helical membrane pass occupies residues 237 to 257; it reads VLILLSIAAVVSLALGLYQTF. The Vacuolar portion of the chain corresponds to 258 to 273; it reads GQPPTLDPITGKPEPR. A helical membrane pass occupies residues 274-294; the sequence is VEWVEGVAIMAAIVIVVTVGG. The Cytoplasmic portion of the chain corresponds to 295 to 448; sequence VNDWQKELQF…QLRLSRVADA (154 aa). The chain crosses the membrane as a helical span at residues 449-469; that stretch reads IAKLGGAASALLFIVLLIEFL. Residues 470–488 are Vacuolar-facing; the sequence is VRLKSNDSSSKNKGQEFLQ. A helical transmembrane segment spans residues 489-509; sequence ILIVSVTLLVVAVPEGLPLAV. Residues V498 and E503 each coordinate Ca(2+). The Cytoplasmic segment spans residues 510–938; it reads TLALAFATNR…GRTVNDAVKK (429 aa). Catalysis depends on D545, which acts as the 4-aspartylphosphate intermediate. Positions 545 and 547 each coordinate Mg(2+). Residues T547, E638, K691, R736, 807–809, R856, and K862 contribute to the ATP site; that span reads TGD. A Mg(2+)-binding site is contributed by D881. N884 provides a ligand contact to ATP. The chain crosses the membrane as a helical span at residues 939-959; it reads FLQFQITVNITAVFLTIISAV. A Ca(2+)-binding site is contributed by N947. The Vacuolar segment spans residues 960 to 966; it reads ASTDQSS. A helical membrane pass occupies residues 967-987; sequence VLTAVQLLWVNLIMDTLAALA. N977 and D981 together coordinate Ca(2+). At 988 to 1016 the chain is on the cytoplasmic side; the sequence is LATDPPTPEVLKRKPEKPGASLFTFDMWK. The chain crosses the membrane as a helical span at residues 1017–1037; that stretch reads MIICQSMYQLAVTLVLHFAGN. Residues 1038–1084 lie on the Vacuolar side of the membrane; the sequence is SIFHYPSNTADMNTIVFNTFVWLQLFNEINNRRLDNKLNIFERINHN. A helical transmembrane segment spans residues 1085-1105; sequence FLFIAIFVIVAGIQVIIVFFG. Topologically, residues 1106-1115 are cytoplasmic; it reads GAAFSVKRID. Residues 1116–1136 traverse the membrane as a helical segment; that stretch reads GKGWAISIVFGVISIPLGALI. The Vacuolar portion of the chain corresponds to 1137-1292; that stretch reads RCVPNNFLRK…ALDKKSSNVH (156 aa).

The protein belongs to the cation transport ATPase (P-type) (TC 3.A.3) family.

It localises to the vacuole membrane. The catalysed reaction is Ca(2+)(in) + ATP + H2O = Ca(2+)(out) + ADP + phosphate + H(+). In terms of biological role, this magnesium-dependent enzyme catalyzes the hydrolysis of ATP coupled with the transport of calcium. Transports the calcium to the vacuole and participates in the control of the cytosolic free calcium. The polypeptide is Calcium-transporting ATPase 2 (pmc1) (Schizosaccharomyces pombe (strain 972 / ATCC 24843) (Fission yeast)).